The primary structure comprises 258 residues: Peptidase inhibitor 15 (258 aa).

The signal sequence occupies residues methionine 1–glycine 21. Positions leucine 22–arginine 60 are excised as a propeptide. Residues asparagine 36 and asparagine 124 are each glycosylated (N-linked (GlcNAc...) asparagine). Residues valine 71–tyrosine 211 form the SCP domain.

This sequence belongs to the CRISP family.

It is found in the secreted. Functionally, serine protease inhibitor which displays weak inhibitory activity against trypsin. May be involved in facial patterning during embryonic development. This chain is Peptidase inhibitor 15 (pi15), found in Xenopus laevis (African clawed frog).